The primary structure comprises 234 residues: Protein rgg8 (234 aa).

It is found in the cytoplasm. The protein resides in the nucleus. This chain is Protein rgg8 (rgg8), found in Schizosaccharomyces pombe (strain 972 / ATCC 24843) (Fission yeast).